The chain runs to 260 residues: Nuclear shuttle protein (260 aa).

Residues methionine 1–arginine 29 are disordered. The short motif at asparagine 21–arginine 42 is the Bipartite nuclear localization signal element. A Nuclear localization signal motif is present at residues valine 84–leucine 100. An interaction with Arabidopsis thaliana NSI protein region spans residues glutamine 154–glycine 191.

This sequence belongs to the begomovirus nuclear shuttle protein family. In terms of assembly, binds to single-stranded and double-stranded viral DNA. Interacts with the host nuclear shuttle interacting (NSI) protein. This interaction may allow NSP to recruit NSI monomers to the viral genome and thus regulate nuclear export of viral genome by NSP.

It localises to the host nucleus. It is found in the host cytoplasm. Its subcellular location is the host cell membrane. Functionally, binds to the genomic viral ssDNA, shuttles it into and out of the cell nucleus. Begomoviruses use 2 proteins to transport their DNA from cell to cell. The nuclear shuttle protein (NSP) shuttles it between nucleus and cytoplasm and the movement protein (MP) probably transports the DNA-NSP complex to the cell periphery and facilitates movement across the cell wall. This Indian cassava mosaic virus (ICMV) protein is Nuclear shuttle protein.